Here is a 79-residue protein sequence, read N- to C-terminus: Sulfur carrier protein TusA (79 aa).

The active-site Cysteine persulfide intermediate is the Cys-16.

The protein belongs to the sulfur carrier protein TusA family.

It is found in the cytoplasm. In terms of biological role, sulfur carrier protein which probably makes part of a sulfur-relay system. This chain is Sulfur carrier protein TusA, found in Pseudomonas aeruginosa (strain LESB58).